The following is a 305-amino-acid chain: tRNA-cytidine(32) 2-sulfurtransferase (305 aa).

The tract at residues 1-20 (MTAVLPLPQPLADPAPRDPR) is disordered. The PP-loop motif motif lies at 59-64 (SGGKDS). Cys134, Cys137, and Cys225 together coordinate [4Fe-4S] cluster. Residues 282–305 (DAPSGLDPDPRAWLSAGHATHDSD) form a disordered region.

It belongs to the TtcA family. In terms of assembly, homodimer. Mg(2+) is required as a cofactor. [4Fe-4S] cluster serves as cofactor.

It localises to the cytoplasm. It carries out the reaction cytidine(32) in tRNA + S-sulfanyl-L-cysteinyl-[cysteine desulfurase] + AH2 + ATP = 2-thiocytidine(32) in tRNA + L-cysteinyl-[cysteine desulfurase] + A + AMP + diphosphate + H(+). Its pathway is tRNA modification. Functionally, catalyzes the ATP-dependent 2-thiolation of cytidine in position 32 of tRNA, to form 2-thiocytidine (s(2)C32). The sulfur atoms are provided by the cysteine/cysteine desulfurase (IscS) system. The chain is tRNA-cytidine(32) 2-sulfurtransferase from Xanthomonas axonopodis pv. citri (strain 306).